The sequence spans 550 residues: Membrane protein insertase YidC (550 aa).

6 consecutive transmembrane segments (helical) span residues 6–26 (LVLFLVFSLSLVMLWNAWLKQ), 333–353 (VVDYGWLTVIAAPLFWVLSWI), 356–376 (VVGNWGWAIIIVTILIKLMFF), 430–450 (LPILVQIPVFISLYWVLLGSV), 469–489 (PYFILPVIMGVSMLIQMKLNP), and 504–524 (PVIFTFMFLWFPSGLVLYWVV).

Belongs to the OXA1/ALB3/YidC family. Type 1 subfamily. In terms of assembly, interacts with the Sec translocase complex via SecD. Specifically interacts with transmembrane segments of nascent integral membrane proteins during membrane integration.

It localises to the cell inner membrane. Functionally, required for the insertion and/or proper folding and/or complex formation of integral membrane proteins into the membrane. Involved in integration of membrane proteins that insert both dependently and independently of the Sec translocase complex, as well as at least some lipoproteins. Aids folding of multispanning membrane proteins. The protein is Membrane protein insertase YidC of Aromatoleum aromaticum (strain DSM 19018 / LMG 30748 / EbN1) (Azoarcus sp. (strain EbN1)).